A 20-amino-acid polypeptide reads, in one-letter code: Dentinal fluid transport-stimulating peptide (20 aa).

The segment at 1–20 (GVIAWELQHNEPGRKDSTAG) is disordered. Residues 8 to 20 (QHNEPGRKDSTAG) are compositionally biased toward basic and acidic residues.

Functionally, this peptide stimulates the transport of dentinal fluid, which is important for the prevention of dental caries. The sequence is that of Dentinal fluid transport-stimulating peptide from Rattus norvegicus (Rat).